A 950-amino-acid chain; its full sequence is Inactive atromentin synthetase invA4 (950 aa).

The adenylation (A) domain stretch occupies residues 37–460 (SRAVSQYPNH…SGRIKDTVVV (424 aa)). The region spanning 592–670 (APSTETEKTL…TLAKYVDSLV (79 aa)) is the Carrier domain. The interval 597–667 (TEKTLAGIYA…EIITLAKYVD (71 aa)) is thiolation and peptide carrier (T) domain. Ser-629 is modified (O-(pantetheine 4'-phosphoryl)serine). Residues 693 to 797 (PIFMVHPGIG…GIIDMIPHHM (105 aa)) are thioesterase (TE) domain.

The protein belongs to the ATP-dependent AMP-binding enzyme family.

In terms of biological role, inactive atromentin synthetase homolog. Does not accept 4-hydroxyphenylpyruvate (4-HPP) as substrate. In Paxillus involutus (Naked brimcap), this protein is Inactive atromentin synthetase invA4 (invA4).